The primary structure comprises 587 residues: Ran GTPase-activating protein 1 (587 aa).

A2 bears the N-acetylalanine mark. K8 participates in a covalent cross-link: Glycyl lysine isopeptide (Lys-Gly) (interchain with G-Cter in SUMO1); alternate. K8 participates in a covalent cross-link: Glycyl lysine isopeptide (Lys-Gly) (interchain with G-Cter in SUMO2); alternate. K15 participates in a covalent cross-link: Glycyl lysine isopeptide (Lys-Gly) (interchain with G-Cter in SUMO2). S24 carries the phosphoserine modification. LRR repeat units lie at residues 48–71 (FDSLEALRLEGNTVGVEAARVIAK), 111–134 (GAQLVELDLSDNAFGPDGVQGFEA), 207–230 (IGTLEEVHMPQNGINHPGITALAQ), and 235–258 (NPLLRVINLNDNTFTEKGAVAMAE). A Glycyl lysine isopeptide (Lys-Gly) (interchain with G-Cter in SUMO2) cross-link involves residue K279. 2 LRR repeats span residues 292–319 (LPKLKELNLSFCEIKRDAALAVAEAMAD) and 320–343 (KAELEKLDLNGNTLGEEGCEQLQE). The residue at position 301 (S301) is a Phosphoserine. The interval 357–430 (LSDDEDEEEE…EPAPVLSSPP (74 aa)) is disordered. Residue S358 is modified to Phosphoserine. The span at 358 to 397 (SDDEDEEEEEEGEEEEEEAEEEEEEDEEEEEEEEEEEEEE) shows a compositional bias: acidic residues. Positions 400-410 (QRGQGEKSATP) are enriched in polar residues. Residue T409 is modified to Phosphothreonine; by CDK2. 2 positions are modified to phosphoserine: S428 and S435. Phosphothreonine is present on T436. S442 bears the Phosphoserine mark. A Glycyl lysine isopeptide (Lys-Gly) (interchain with G-Cter in SUMO2) cross-link involves residue K452. Positions 523 to 526 (LKSE) match the SUMO conjugation motif. K524 participates in a covalent cross-link: Glycyl lysine isopeptide (Lys-Gly) (interchain with G-Cter in SUMO1); alternate. K524 participates in a covalent cross-link: Glycyl lysine isopeptide (Lys-Gly) (interchain with G-Cter in SUMO2); alternate. The residue at position 524 (K524) is an N6-acetyllysine; alternate. A Glycyl lysine isopeptide (Lys-Gly) (interchain with G-Cter in SUMO2) cross-link involves residue K586.

Belongs to the RNA1 family. In terms of assembly, homodimer. Interacts with RAN. Forms a complex with RANBP2/NUP358, NXF1 and NXT1. Forms a tight complex in association with RANBP2/NUP358 and UBE2I/UBC9, the ubiquitin-conjugating enzyme E2. Interacts with UBE2I; the interaction conjugates SUMO1 to RANGAP1, and subsequently stabilizes interactions of sumoylated RANGAP1 with RANBP2/NUP358. The complex composed of RANBP2, SUMO1, RANGAP1 and UBE2I associates with nuclear pore complexes. Identified in a complex composed of RAN, RANBP2, sumoylated RANGAP1, UBE2I and XPO1. Identified in a complex composed of RAN, RANGAP1 and RANBP1. Interacts with TRAF6. Interacts with SUMO1 and SENP1. Interacts (when sumoylated) with MYCBP2; interaction inhibits MYCBP2 E3 ubiquitin-protein ligase activity and promotes MYCBP2 translocation to the nucleus. Phosphorylation occurs before nuclear envelope breakdown and continues throughout mitosis. Phosphorylated by the M-phase kinase cyclin B/Cdk1, in vitro. Differential timimg of dephosphorylation occurs during phases of mitosis. The phosphorylated form remains associated with RANBP2/NUP358 and the SUMO E2-conjugating enzyme, UBE2I, on nuclear pore complex (NPC) diassembly and during mitosis. Post-translationally, sumoylated. Sumoylation is necessary for targeting to the nuclear envelope (NE), and for association with mitotic spindles and kinetochores during mitosis. Also required for interaction with RANBP2 and is mediated by UBE2I. Desumoylated by HINT1. In terms of tissue distribution, highly expressed in brain, thymus and testis.

The protein resides in the cytoplasm. The protein localises to the nucleus. Its subcellular location is the nucleoplasm. It localises to the nucleus envelope. It is found in the chromosome. The protein resides in the centromere. The protein localises to the kinetochore. Its subcellular location is the cytoskeleton. It localises to the spindle. Its function is as follows. GTPase activator for RAN. Converts cytoplasmic GTP-bound RAN to GDP-bound RAN, which is essential for RAN-mediated nuclear import and export. Mediates dissociation of cargo from nuclear export complexes containing XPO1, RAN and RANBP2 after nuclear export. The chain is Ran GTPase-activating protein 1 (RANGAP1) from Homo sapiens (Human).